Here is a 155-residue protein sequence, read N- to C-terminus: Late embryogenesis abundant protein 2 (155 aa).

Residues 1 to 155 (MTSHDQSYRA…DKDHFPTNRH (155 aa)) are disordered. Basic and acidic residues-rich tracts occupy residues 11 to 21 (GEAKGRTEEKT) and 28 to 39 (IEDKAQAAKEKA). Positions 40–78 (QQAAQTAKDKTSQTAQAAKEKTQQTAQAAKDKTQQTTQA) are enriched in low complexity. A run of 2 repeats spans residues 53-63 (TAQAAKEKTQQ) and 64-74 (TAQAAKDKTQQ). The interval 53–74 (TAQAAKEKTQQTAQAAKDKTQQ) is 2 X 11 AA approximate tandem repeats of T-A-Q-A-A-K-E-K-T-Q-Q. Over residues 79 to 95 (TKEKAQDTTGRAKEKGS) the composition is skewed to basic and acidic residues. Polar residues predominate over residues 97 to 120 (MGQSTKETAQSGKDNSAGFLQQTG). A compositionally biased stretch (basic and acidic residues) spans 144–155 (DQDKDHFPTNRH).

This sequence belongs to the LEA type 4 family. Highest expression is found in seeds. No expression detected in adult tissues.

The protein is Late embryogenesis abundant protein 2 of Cicer arietinum (Chickpea).